The sequence spans 144 residues: Cytochrome c oxidase subunit 4 isoform 1, mitochondrial (144 aa).

At 1-73 (SVVKSEDYTL…SFAEMNRGSN (73 aa)) the chain is on the mitochondrial matrix side. Residue lysine 4 is modified to N6-acetyllysine; alternate. Residue lysine 4 is modified to N6-succinyllysine; alternate. Residues serine 31 and serine 33 each carry the phosphoserine modification. An N6-acetyllysine; alternate modification is found at lysine 35. The residue at position 35 (lysine 35) is an N6-succinyllysine; alternate. Lysine 42 carries the post-translational modification N6-acetyllysine. The helical transmembrane segment at 74–99 (EWKTVVGAAMFFIGFTAILIMLEKRY) threads the bilayer. The Mitochondrial intermembrane segment spans residues 100–144 (VYGPLPHTFDKEWVAMQTKRMLDLKVNPVDGLASKWDYEKKEWKK).

It belongs to the cytochrome c oxidase IV family. Component of the cytochrome c oxidase (complex IV, CIV), a multisubunit enzyme composed of 14 subunits. The complex is composed of a catalytic core of 3 subunits MT-CO1, MT-CO2 and MT-CO3, encoded in the mitochondrial DNA, and 11 supernumerary subunits COX4I, COX5A, COX5B, COX6A, COX6B, COX6C, COX7A, COX7B, COX7C, COX8 and NDUFA4, which are encoded in the nuclear genome. The complex exists as a monomer or a dimer and forms supercomplexes (SCs) in the inner mitochondrial membrane with NADH-ubiquinone oxidoreductase (complex I, CI) and ubiquinol-cytochrome c oxidoreductase (cytochrome b-c1 complex, complex III, CIII), resulting in different assemblies (supercomplex SCI(1)III(2)IV(1) and megacomplex MCI(2)III(2)IV(2)). Interacts with PHB2; the interaction decreases in absence of SPHK2. Interacts with AFG1L. Interacts with ABCB7; this interaction allows the regulation of cellular iron homeostasis and cellular reactive oxygen species (ROS) levels in cardiomyocytes. Interacts with FLVCR2; this interaction occurs in the absence of heme and is disrupted upon heme binding. Interacts with IRGC.

The protein resides in the mitochondrion inner membrane. It participates in energy metabolism; oxidative phosphorylation. Its function is as follows. Component of the cytochrome c oxidase, the last enzyme in the mitochondrial electron transport chain which drives oxidative phosphorylation. The respiratory chain contains 3 multisubunit complexes succinate dehydrogenase (complex II, CII), ubiquinol-cytochrome c oxidoreductase (cytochrome b-c1 complex, complex III, CIII) and cytochrome c oxidase (complex IV, CIV), that cooperate to transfer electrons derived from NADH and succinate to molecular oxygen, creating an electrochemical gradient over the inner membrane that drives transmembrane transport and the ATP synthase. Cytochrome c oxidase is the component of the respiratory chain that catalyzes the reduction of oxygen to water. Electrons originating from reduced cytochrome c in the intermembrane space (IMS) are transferred via the dinuclear copper A center (CU(A)) of subunit 2 and heme A of subunit 1 to the active site in subunit 1, a binuclear center (BNC) formed by heme A3 and copper B (CU(B)). The BNC reduces molecular oxygen to 2 water molecules using 4 electrons from cytochrome c in the IMS and 4 protons from the mitochondrial matrix. This is Cytochrome c oxidase subunit 4 isoform 1, mitochondrial (COX4I1) from Pithecia pithecia (White-faced saki).